The sequence spans 98 residues: NADH-ubiquinone oxidoreductase chain 4L (98 aa).

3 helical membrane passes run 1–21, 29–49, and 61–81; these read MSLV…GLLM, SLLC…LTIL, and IILL…LVMV.

It belongs to the complex I subunit 4L family. Core subunit of respiratory chain NADH dehydrogenase (Complex I) which is composed of 45 different subunits.

The protein localises to the mitochondrion inner membrane. The enzyme catalyses a ubiquinone + NADH + 5 H(+)(in) = a ubiquinol + NAD(+) + 4 H(+)(out). In terms of biological role, core subunit of the mitochondrial membrane respiratory chain NADH dehydrogenase (Complex I) which catalyzes electron transfer from NADH through the respiratory chain, using ubiquinone as an electron acceptor. Part of the enzyme membrane arm which is embedded in the lipid bilayer and involved in proton translocation. The sequence is that of NADH-ubiquinone oxidoreductase chain 4L (MT-ND4L) from Elaphodus cephalophus (Tufted deer).